We begin with the raw amino-acid sequence, 59 residues long: Large ribosomal subunit protein uL30 (59 aa).

Belongs to the universal ribosomal protein uL30 family. In terms of assembly, part of the 50S ribosomal subunit.

The sequence is that of Large ribosomal subunit protein uL30 from Histophilus somni (strain 129Pt) (Haemophilus somnus).